We begin with the raw amino-acid sequence, 372 residues long: Alanine dehydrogenase 2 (372 aa).

Residue His-95 is part of the active site. Residue 169-199 (KVTIIGGGQAGTNAAKIALGLGADVTILDVN) participates in NAD(+) binding.

It belongs to the AlaDH/PNT family.

The enzyme catalyses L-alanine + NAD(+) + H2O = pyruvate + NH4(+) + NADH + H(+). Its pathway is amino-acid degradation; L-alanine degradation via dehydrogenase pathway; NH(3) and pyruvate from L-alanine: step 1/1. Its function is as follows. May play a role in cell wall synthesis as L-alanine is an important constituent of the peptidoglycan layer. This is Alanine dehydrogenase 2 (ald2) from Staphylococcus aureus (strain MRSA252).